The following is a 358-amino-acid chain: Heavy metal-associated isoprenylated plant protein 37 (358 aa).

The region spanning 12 to 75 (IQTFSLRVNI…KLVKAGKHAE (64 aa)) is the HMA domain. 2 residues coordinate a metal cation: cysteine 23 and cysteine 26. Disordered stretches follow at residues 100-194 (QKGQ…QNTQ) and 332-358 (QQQS…CNIM). Residues 128–141 (AEEDGDGSEEEDGD) show a composition bias toward acidic residues. The segment covering 148-181 (ANQQQQQNVVNAKKNSGGAAMNNGNNGVNAASKK) has biased composition (low complexity). 2 stretches are compositionally biased toward polar residues: residues 184–194 (QKQSNHNQNTQ) and 339–358 (HATN…CNIM). Cysteine 355 carries the post-translational modification Cysteine methyl ester. Residue cysteine 355 is the site of S-farnesyl cysteine attachment. A propeptide spans 356–358 (NIM) (removed in mature form).

It belongs to the HIPP family.

Its function is as follows. Heavy-metal-binding protein. The polypeptide is Heavy metal-associated isoprenylated plant protein 37 (Arabidopsis thaliana (Mouse-ear cress)).